Consider the following 419-residue polypeptide: MRFEEWVKDKHIPFKLNHPDDNYDDFKPLRKIIGDTRVVALGENSHFIKEFFLLRHTLLRFFIEDLGFTTFAFEFGFAEGQIINNWIHGQGTDDEIGRFLKHFYYPEELKTTFLWLREYNKAAKEKITFLGIDIPRNGGSYLPNMEIVHDFFRTADKEALHIIDDAFNIAKKIDYFSTSQAALNLHELTDSEKCRLTSQLARVKVRLEAMAPIHIEKYGIDKYETILHYANGMIYLDYNIQAMSGFISGGGMQGDMGAKDKYMADSVLWHLKNPQSEQKVIVVAHNAHIQKTPILYDGFLSCLPMGQRLKNAIGDDYMSLGITSYSGHTAALYPEVDTKYGFRVDNFQLQEPNEGSVEKAISGCGVTNSFVFFRNIPEDLQSIPNMIRFDSIYMKAELEKAFDGIFQIEKSSVSEVVYE.

In terms of biological role, this enzyme confers resistance to erythromycin through inactivation by hydrolyzing the lactone ring of the antibiotic. This Escherichia coli protein is Erythromycin esterase type II (ereB).